The following is a 73-amino-acid chain: Potassium channel toxin alpha-KTx 27.1 (73 aa).

The first 23 residues, 1–23 (MKFLFLTLFVCCFIAVLVIPSEA), serve as a signal peptide directing secretion.

It belongs to the short scorpion toxin superfamily. Potassium channel inhibitor family. Alpha-KTx 27 subfamily. In terms of processing, contains 4 disulfide bonds. In terms of tissue distribution, expressed by the venom gland.

It is found in the secreted. The polypeptide is Potassium channel toxin alpha-KTx 27.1 (Buthus israelis (Israeli scorpion)).